Here is a 289-residue protein sequence, read N- to C-terminus: Elongation factor Ts (289 aa).

Residues 82–85 (TDFL) are involved in Mg(2+) ion dislocation from EF-Tu.

It belongs to the EF-Ts family.

It localises to the cytoplasm. Associates with the EF-Tu.GDP complex and induces the exchange of GDP to GTP. It remains bound to the aminoacyl-tRNA.EF-Tu.GTP complex up to the GTP hydrolysis stage on the ribosome. This Azotobacter vinelandii (strain DJ / ATCC BAA-1303) protein is Elongation factor Ts.